The sequence spans 200 residues: Large ribosomal subunit protein uL4 (200 aa).

The segment at 42-65 (TRAHKSRADVSGGGKKPFRQKGTG) is disordered.

This sequence belongs to the universal ribosomal protein uL4 family. In terms of assembly, part of the 50S ribosomal subunit.

Its function is as follows. One of the primary rRNA binding proteins, this protein initially binds near the 5'-end of the 23S rRNA. It is important during the early stages of 50S assembly. It makes multiple contacts with different domains of the 23S rRNA in the assembled 50S subunit and ribosome. Forms part of the polypeptide exit tunnel. In Acinetobacter baumannii (strain AB307-0294), this protein is Large ribosomal subunit protein uL4.